The primary structure comprises 1033 residues: Ubiquitin carboxyl-terminal hydrolase 48 (1033 aa).

The USP domain occupies 89 to 419 (VGLTNLGATC…NAYMLVYRLQ (331 aa)). The Nucleophile role is filled by Cys98. His351 (proton acceptor) is an active-site residue. DUSP domains lie at 457–552 (QSVA…KALC), 567–690 (NQLN…NKEC), and 710–823 (MMAS…RTRA). The tract at residues 610–639 (EQDEDAEHSNGKLNGNAPNKDEVNEEKREE) is disordered. The disordered stretch occupies residues 878–920 (APELNVSSSEAEEEREENKPEGEQDPDFNQSNGGAKRQKLSHQ). The region spanning 931–1007 (RRSTRHRKVR…ILLKADEPIA (77 aa)) is the Ubiquitin-like domain.

Belongs to the peptidase C19 family.

The protein resides in the cytoplasm. Its subcellular location is the nucleus. It catalyses the reaction Thiol-dependent hydrolysis of ester, thioester, amide, peptide and isopeptide bonds formed by the C-terminal Gly of ubiquitin (a 76-residue protein attached to proteins as an intracellular targeting signal).. Recognizes and hydrolyzes the peptide bond at the C-terminal Gly of ubiquitin. Involved in the processing of poly-ubiquitin precursors as well as that of ubiquitinated proteins. The polypeptide is Ubiquitin carboxyl-terminal hydrolase 48 (USP48) (Gallus gallus (Chicken)).